The primary structure comprises 564 residues: Proline--tRNA ligase (564 aa).

The protein belongs to the class-II aminoacyl-tRNA synthetase family. ProS type 1 subfamily. Homodimer.

It localises to the cytoplasm. The enzyme catalyses tRNA(Pro) + L-proline + ATP = L-prolyl-tRNA(Pro) + AMP + diphosphate. In terms of biological role, catalyzes the attachment of proline to tRNA(Pro) in a two-step reaction: proline is first activated by ATP to form Pro-AMP and then transferred to the acceptor end of tRNA(Pro). As ProRS can inadvertently accommodate and process non-cognate amino acids such as alanine and cysteine, to avoid such errors it has two additional distinct editing activities against alanine. One activity is designated as 'pretransfer' editing and involves the tRNA(Pro)-independent hydrolysis of activated Ala-AMP. The other activity is designated 'posttransfer' editing and involves deacylation of mischarged Ala-tRNA(Pro). The misacylated Cys-tRNA(Pro) is not edited by ProRS. In Xanthomonas campestris pv. campestris (strain 8004), this protein is Proline--tRNA ligase.